The primary structure comprises 444 residues: ATP-dependent protease ATPase subunit HslU (444 aa).

Residues I18, 60–65, D256, E322, and R394 each bind ATP; that span reads GVGKTE.

It belongs to the ClpX chaperone family. HslU subfamily. In terms of assembly, a double ring-shaped homohexamer of HslV is capped on each side by a ring-shaped HslU homohexamer. The assembly of the HslU/HslV complex is dependent on binding of ATP.

The protein localises to the cytoplasm. Its function is as follows. ATPase subunit of a proteasome-like degradation complex; this subunit has chaperone activity. The binding of ATP and its subsequent hydrolysis by HslU are essential for unfolding of protein substrates subsequently hydrolyzed by HslV. HslU recognizes the N-terminal part of its protein substrates and unfolds these before they are guided to HslV for hydrolysis. This chain is ATP-dependent protease ATPase subunit HslU, found in Klebsiella pneumoniae (strain 342).